Reading from the N-terminus, the 245-residue chain is Complement C1q subcomponent subunit C (245 aa).

The signal sequence occupies residues 1–28 (MDVGPSSLPHLGLKLLLLLLLLPLRGQA). The region spanning 31-112 (GCYGIPGMPG…GIPGEPGEEG (82 aa)) is the Collagen-like domain. A 4-hydroxyproline mark is found at proline 36, proline 39, proline 42, proline 45, proline 54, and proline 63. Positions 45–113 (PGKDGYDGLP…IPGEPGEEGR (69 aa)) are disordered. Residues 54–71 (PGPKGEPGIPAIPGIRGP) are compositionally biased toward low complexity. Residue lysine 75 is modified to 5-hydroxylysine. O-linked (Gal...) hydroxylysine glycosylation is present at lysine 75. 4-hydroxyproline occurs at positions 81, 93, 96, 99, and 105. Residues 90–99 (MGPPGMPGVP) are compositionally biased toward pro residues. The 131-residue stretch at 115 to 245 (KQKFQSVFTV…VFSGFLLFPD (131 aa)) folds into the C1q domain. A disulfide bridge connects residues cysteine 179 and cysteine 193.

In terms of assembly, core component of the complement C1 complex, a calcium-dependent complex composed of 1 molecule of the C1Q subcomplex, 2 molecules of C1R and 2 molecules of C1S. The C1Q subcomplex is composed 18 subunits: 3 chains of C1QA, C1QB, and C1QC trimerize to form 6 collagen-like triple helices connected to six globular ligand-recognition modules (C1q domain). Post-translationally, O-linked glycans consist of Glc-Gal disaccharides bound to the oxygen atom of post-translationally added hydroxyl groups.

The protein localises to the secreted. It localises to the cell surface. The C1Q subcomplex is inhibited by sulfated molecules, such as triterpenoid sulfates, heparan sulfate, or chondroitin sulfates. Its function is as follows. Core component of the complement C1 complex, a multiprotein complex that initiates the classical pathway of the complement system, a cascade of proteins that leads to phagocytosis and breakdown of pathogens and signaling that strengthens the adaptive immune system. The classical complement pathway is initiated by the C1Q subcomplex of the C1 complex, which specifically binds IgG or IgM immunoglobulins complexed with antigens, forming antigen-antibody complexes on the surface of pathogens: C1QA, together with C1QB and C1QC, specifically recognizes and binds the Fc regions of IgG or IgM via its C1q domain. Immunoglobulin-binding activates the proenzyme C1R, which cleaves C1S, initiating the proteolytic cascade of the complement system. The C1Q subcomplex is activated by a hexamer of IgG complexed with antigens, while it is activated by a pentameric IgM. The C1Q subcomplex also recognizes and binds phosphatidylserine exposed on the surface of cells undergoing programmed cell death, possibly promoting activation of the complement system. The polypeptide is Complement C1q subcomponent subunit C (Homo sapiens (Human)).